A 510-amino-acid chain; its full sequence is MAHRRLIMTMTKMMMMVTMMMMMDKTCICADISRGSFPKGFVFGTASSAFQHEGAVKAEGRGPTIWDTFSHTFGKITDFSNADVAVDQYHRYEEDVQLMKNMGMDAYRFSISWTRIFPNGVGHINEAGIDHYNKLINALLAKGIEPYVTLYHWDLPQALHDRYLGWLNPQIINDFAAYAEVCFQRFGDRVKHWITFNEPHTFAIQGYDVGLQAPGRCTILFKLTCREGNSSTEPYIVGHNVILTHATVSDIYRKKYKAKQGGSLGIAFDVMWFEPESNKTEDIEAAQRAQDFQLGWFLDPLMFGDYPSSMRSRVGSRLPVFTGSQSSLVKGSLDFVGINHYTTYYARNNATNLIGTLLHDAVSDSGTVTLPFKGLSTIGDRASSIWLYIVPRGMRSLMNYIKHRYGNPPVFITENGMDDPNSILISRKDALKDAKRIKYHHDYLSSLQASIKEDGCNVKGYFVWSLLDNWEWAAGYSSRFGLYFVDYRDNLKRYPKDSVHWFTSFLNSTS.

Positions methionine 1–cysteine 29 are cleaved as a signal peptide. A beta-D-glucoside is bound by residues glutamine 51, histidine 152, and asparagine 197–glutamate 198. The active-site Proton donor is the glutamate 198. A disulfide bridge connects residues cysteine 217 and cysteine 225. Residues asparagine 229 and asparagine 278 are each glycosylated (N-linked (GlcNAc...) asparagine). Tyrosine 341 contacts a beta-D-glucoside. Asparagine 349 carries N-linked (GlcNAc...) asparagine glycosylation. A beta-D-glucoside contacts are provided by residues glutamate 414, tryptophan 464, glutamate 471–tryptophan 472, and phenylalanine 480. Glutamate 414 functions as the Nucleophile in the catalytic mechanism. Asparagine 507 carries N-linked (GlcNAc...) asparagine glycosylation.

The protein belongs to the glycosyl hydrolase 1 family.

The enzyme catalyses Hydrolysis of terminal, non-reducing beta-D-glucosyl residues with release of beta-D-glucose.. The protein is Beta-glucosidase 40 of Arabidopsis thaliana (Mouse-ear cress).